A 141-amino-acid polypeptide reads, in one-letter code: MFACAKLACTPALIRAGSRVAYRPISASVLSRPETRTGEGCTVFNGTQNGVSQLIQREFQTTAVNRDIDTAAKFIGAGAATVGVAGSGAGIGTVFGSLIIGYARNPSLKQQLFSYAILGFALSEAMGLFCLMVAFLILFAM.

Residues 1 to 66 constitute a mitochondrion transit peptide; the sequence is MFACAKLACT…REFQTTAVNR (66 aa). The helical transmembrane segment at 82–102 threads the bilayer; it reads VGVAGSGAGIGTVFGSLIIGY. N6,N6,N6-trimethyllysine is present on lysine 109. A helical transmembrane segment spans residues 117 to 137; it reads ILGFALSEAMGLFCLMVAFLI.

The protein belongs to the ATPase C chain family. In terms of assembly, F-type ATPases have 2 components, CF(1) - the catalytic core - and CF(0) - the membrane proton channel. CF(1) has five subunits: alpha(3), beta(3), gamma(1), delta(1), epsilon(1). CF(0) has three main subunits: a, b and c. Interacts with TMEM70 and TMEM242. In terms of processing, trimethylated by ATPSCKMT at Lys-109. Methylation is required for proper incorporation of the C subunit into the ATP synthase complex and mitochondrial respiration.

The protein resides in the mitochondrion membrane. Its function is as follows. Mitochondrial membrane ATP synthase (F(1)F(0) ATP synthase or Complex V) produces ATP from ADP in the presence of a proton gradient across the membrane which is generated by electron transport complexes of the respiratory chain. F-type ATPases consist of two structural domains, F(1) - containing the extramembraneous catalytic core and F(0) - containing the membrane proton channel, linked together by a central stalk and a peripheral stalk. During catalysis, ATP synthesis in the catalytic domain of F(1) is coupled via a rotary mechanism of the central stalk subunits to proton translocation. Part of the complex F(0) domain. A homomeric c-ring of probably 10 subunits is part of the complex rotary element. This chain is ATP synthase F(0) complex subunit C3, mitochondrial, found in Bos taurus (Bovine).